The following is a 327-amino-acid chain: Methionyl-tRNA formyltransferase (327 aa).

(6S)-5,6,7,8-tetrahydrofolate is bound at residue 121–124 (SLLP).

This sequence belongs to the Fmt family.

The enzyme catalyses L-methionyl-tRNA(fMet) + (6R)-10-formyltetrahydrofolate = N-formyl-L-methionyl-tRNA(fMet) + (6S)-5,6,7,8-tetrahydrofolate + H(+). Its function is as follows. Attaches a formyl group to the free amino group of methionyl-tRNA(fMet). The formyl group appears to play a dual role in the initiator identity of N-formylmethionyl-tRNA by promoting its recognition by IF2 and preventing the misappropriation of this tRNA by the elongation apparatus. The sequence is that of Methionyl-tRNA formyltransferase from Burkholderia vietnamiensis (strain G4 / LMG 22486) (Burkholderia cepacia (strain R1808)).